Reading from the N-terminus, the 209-residue chain is Protein TIC 20-v, chloroplastic (209 aa).

Residues 1–49 constitute a chloroplast transit peptide; it reads MAIISQFFAPLPSLTGTLTLTGRSFLPLNLDTQFPKPRLSRDRAATLVL. Transmembrane regions (helical) follow at residues 63-83, 103-123, 132-152, and 173-193; these read IISA…GKFI, AFKS…FVVV, VRFN…PDLL, and TVFL…LFGL.

Belongs to the Tic20 family. As to quaternary structure, part of the Tic complex. In terms of tissue distribution, expressed in leaves, siliques and roots.

The protein resides in the plastid. Its subcellular location is the chloroplast inner membrane. In terms of biological role, may be involved in protein precursor import into chloroplasts. Not redundant with TIC20-I, TIC20-II or TIC20-IV. The sequence is that of Protein TIC 20-v, chloroplastic (TIC20-V) from Arabidopsis thaliana (Mouse-ear cress).